The primary structure comprises 228 residues: 6-carboxyhexanoate--CoA ligase (228 aa).

It belongs to the BioW family. In terms of assembly, homodimer. It depends on Mg(2+) as a cofactor.

It catalyses the reaction heptanedioate + ATP + CoA = 6-carboxyhexanoyl-CoA + AMP + diphosphate. It participates in metabolic intermediate metabolism; pimeloyl-CoA biosynthesis; pimeloyl-CoA from pimelate: step 1/1. Catalyzes the transformation of pimelate into pimeloyl-CoA with concomitant hydrolysis of ATP to AMP. The polypeptide is 6-carboxyhexanoate--CoA ligase (Staphylococcus epidermidis (strain ATCC 12228 / FDA PCI 1200)).